A 723-amino-acid chain; its full sequence is BBSome complex assembly protein BBS10 (723 aa).

The protein belongs to the TCP-1 chaperonin family. Component of a complex composed at least of MKKS, BBS10, BBS12, TCP1, CCT2, CCT3, CCT4, CCT5 and CCT8.

The protein resides in the cell projection. The protein localises to the cilium. In terms of biological role, probable molecular chaperone that assists the folding of proteins upon ATP hydrolysis. Plays a role in the assembly of BBSome, a complex involved in ciliogenesis regulating transports vesicles to the cilia. Involved in adipogenic differentiation. This Pongo abelii (Sumatran orangutan) protein is BBSome complex assembly protein BBS10 (BBS10).